Consider the following 634-residue polypeptide: MAHYNFKKITVVPSAKDFIDLTLSKTQRKTPTVIHKHYQIHRIRHFYMRKVKFTQQNYHDRLSQILSDFPKLDDIHPFYADLMNILYDKDHYKLALGQINIAKNLVDNVAKDYVRLMKYGDSLYRCKQLKRAALGRMCTIIKRQRQSLEYLEQVRQHLSRLPTIDPNTRTLLLCGYPNVGKSSFINKVTRADVDVQPYAFTTKSLFVGHMDYKYLRWQVVDTPGILDHPLEDRNTIEMQAITALAHLRAAVLYVMDLSEQCGHGLKEQLELFQNIRPLFINKPLIVVANKCDVKRIAELSEEDQKIFLDLQAEGFPVIETSTLTEEGVIQVKTEACDRLLAHRVETKMKGNKVNEVLNRLHLAVPNKRDDKERPPFIPEGVIARRKRMEIEEPKKKRERDLELEMGDDYILDLQKYWDLMNSSEKYDKIPEIWEGHNVADYIDPAIMKKLEELEKEEELRTAAGEYDSDSESEDEEMMEIRQLAKQIREKKKLKILQSKEKNKQGPRMPRTAKKVQRADLENEMRSLGVDMDDKNNAHYAVQARRSRSVTRKRKREESVPPSSTARSRSCSRTPRDVSGLRDVKMVKKAKTMMKKAQKKMNRLGKKGEADRHVFDMKPKHLLSGKRKAGKKDRR.

A2 carries the post-translational modification N-acetylalanine. K103 carries the post-translational modification N6-acetyllysine; alternate. K103 participates in a covalent cross-link: Glycyl lysine isopeptide (Lys-Gly) (interchain with G-Cter in SUMO2); alternate. S122 is subject to Phosphoserine. Residues 169 to 340 (RTLLLCGYPN…VKTEACDRLL (172 aa)) form the OBG-type G domain. Residues 175 to 182 (GYPNVGKS), 221 to 225 (DTPGI), and 289 to 292 (NKCD) contribute to the GTP site. Residue K332 forms a Glycyl lysine isopeptide (Lys-Gly) (interchain with G-Cter in SUMO2) linkage. Phosphoserine is present on residues S468, S470, and S472. Residues 494 to 634 (KILQSKEKNK…KRKAGKKDRR (141 aa)) are disordered. Residue K534 forms a Glycyl lysine isopeptide (Lys-Gly) (interchain with G-Cter in SUMO2) linkage. Positions 544 to 554 (RRSRSVTRKRK) are enriched in basic residues. S558 carries the post-translational modification Phosphoserine. A compositionally biased stretch (low complexity) spans 560–572 (PPSSTARSRSCSR). The segment covering 573–585 (TPRDVSGLRDVKM) has biased composition (basic and acidic residues). The segment covering 586 to 604 (VKKAKTMMKKAQKKMNRLG) has biased composition (basic residues). The span at 605–618 (KKGEADRHVFDMKP) shows a compositional bias: basic and acidic residues. Basic residues predominate over residues 619–634 (KHLLSGKRKAGKKDRR).

It belongs to the TRAFAC class OBG-HflX-like GTPase superfamily. OBG GTPase family. NOG subfamily. Associates with pre-60S ribosomal particles. Interacts with MINAS-60 (product of an alternative open reading frame of RBM10). Ubiquitous.

It localises to the nucleus. The protein localises to the nucleolus. In terms of biological role, involved in the biogenesis of the 60S ribosomal subunit. Acts as TP53 repressor, preventing TP53 stabilization and cell cycle arrest. The protein is GTP-binding protein 4 (Gtpbp4) of Mus musculus (Mouse).